The following is a 372-amino-acid chain: 3-isopropylmalate dehydrogenase (372 aa).

Gly79–Glu90 is a binding site for NAD(+). The substrate site is built by Arg97, Arg107, Arg136, and Asp225. Mg(2+)-binding residues include Asp225, Asp250, and Asp254. Position 289–300 (Gly289–Asn300) interacts with NAD(+).

The protein belongs to the isocitrate and isopropylmalate dehydrogenases family. Homodimer. It depends on Mg(2+) as a cofactor. Mn(2+) is required as a cofactor.

The protein resides in the cytoplasm. It carries out the reaction (2R,3S)-3-isopropylmalate + NAD(+) = 4-methyl-2-oxopentanoate + CO2 + NADH. It participates in amino-acid biosynthesis; L-leucine biosynthesis; L-leucine from 3-methyl-2-oxobutanoate: step 3/4. Its function is as follows. Catalyzes the oxidation of 3-carboxy-2-hydroxy-4-methylpentanoate (3-isopropylmalate) to 3-carboxy-4-methyl-2-oxopentanoate. The product decarboxylates to 4-methyl-2 oxopentanoate. The sequence is that of 3-isopropylmalate dehydrogenase (LEU2) from Eremothecium gossypii (strain ATCC 10895 / CBS 109.51 / FGSC 9923 / NRRL Y-1056) (Yeast).